We begin with the raw amino-acid sequence, 486 residues long: Malonate-semialdehyde dehydrogenase 1 (486 aa).

Phe-154, Lys-178, Glu-181, Arg-182, and Ser-231 together coordinate NAD(+). Cys-286 functions as the Nucleophile in the catalytic mechanism. Glu-386 is an NAD(+) binding site.

Belongs to the aldehyde dehydrogenase family. IolA subfamily. As to quaternary structure, homotetramer.

It catalyses the reaction 3-oxopropanoate + NAD(+) + CoA + H2O = hydrogencarbonate + acetyl-CoA + NADH + H(+). It carries out the reaction 2-methyl-3-oxopropanoate + NAD(+) + CoA + H2O = propanoyl-CoA + hydrogencarbonate + NADH + H(+). It participates in polyol metabolism; myo-inositol degradation into acetyl-CoA; acetyl-CoA from myo-inositol: step 7/7. Its function is as follows. Catalyzes the oxidation of malonate semialdehyde (MSA) and methylmalonate semialdehyde (MMSA) into acetyl-CoA and propanoyl-CoA, respectively. Is involved in a myo-inositol catabolic pathway. Bicarbonate, and not CO2, is the end-product of the enzymatic reaction. The chain is Malonate-semialdehyde dehydrogenase 1 from Bacillus anthracis.